A 407-amino-acid chain; its full sequence is Phosphopentomutase (407 aa).

Residues Asp10, Asp306, His311, Asp347, His348, and His359 each coordinate Mn(2+).

Belongs to the phosphopentomutase family. Mn(2+) is required as a cofactor.

It localises to the cytoplasm. The enzyme catalyses 2-deoxy-alpha-D-ribose 1-phosphate = 2-deoxy-D-ribose 5-phosphate. It catalyses the reaction alpha-D-ribose 1-phosphate = D-ribose 5-phosphate. Its pathway is carbohydrate degradation; 2-deoxy-D-ribose 1-phosphate degradation; D-glyceraldehyde 3-phosphate and acetaldehyde from 2-deoxy-alpha-D-ribose 1-phosphate: step 1/2. Isomerase that catalyzes the conversion of deoxy-ribose 1-phosphate (dRib-1-P) and ribose 1-phosphate (Rib-1-P) to deoxy-ribose 5-phosphate (dRib-5-P) and ribose 5-phosphate (Rib-5-P), respectively. This chain is Phosphopentomutase, found in Salmonella paratyphi C (strain RKS4594).